The primary structure comprises 773 residues: Probable dipeptidyl peptidase 4 (773 aa).

Residues 1–18 form the signal peptide; it reads MKLSVLSVLLVSVAQAAA. 6 N-linked (GlcNAc...) asparagine glycosylation sites follow: asparagine 37, asparagine 80, asparagine 112, asparagine 220, asparagine 471, and asparagine 496. The active-site Charge relay system is the serine 619. An N-linked (GlcNAc...) asparagine glycan is attached at asparagine 671. Catalysis depends on charge relay system residues aspartate 696 and histidine 731.

Belongs to the peptidase S9B family.

It localises to the secreted. The enzyme catalyses Release of an N-terminal dipeptide, Xaa-Yaa-|-Zaa-, from a polypeptide, preferentially when Yaa is Pro, provided Zaa is neither Pro nor hydroxyproline.. Functionally, extracellular dipeptidyl-peptidase which removes N-terminal dipeptides sequentially from polypeptides having unsubstituted N-termini provided that the penultimate residue is proline. This Emericella nidulans (strain FGSC A4 / ATCC 38163 / CBS 112.46 / NRRL 194 / M139) (Aspergillus nidulans) protein is Probable dipeptidyl peptidase 4 (dpp4).